We begin with the raw amino-acid sequence, 162 residues long: NADH-quinone oxidoreductase subunit I (162 aa).

4Fe-4S ferredoxin-type domains are found at residues 52 to 82 (LRRY…IEAG) and 93 to 122 (TRYD…EGPN). [4Fe-4S] cluster is bound by residues C62, C65, C68, C72, C102, C105, C108, and C112.

The protein belongs to the complex I 23 kDa subunit family. As to quaternary structure, NDH-1 is composed of 14 different subunits. Subunits NuoA, H, J, K, L, M, N constitute the membrane sector of the complex. It depends on [4Fe-4S] cluster as a cofactor.

It localises to the cell inner membrane. It catalyses the reaction a quinone + NADH + 5 H(+)(in) = a quinol + NAD(+) + 4 H(+)(out). Its function is as follows. NDH-1 shuttles electrons from NADH, via FMN and iron-sulfur (Fe-S) centers, to quinones in the respiratory chain. The immediate electron acceptor for the enzyme in this species is believed to be ubiquinone. Couples the redox reaction to proton translocation (for every two electrons transferred, four hydrogen ions are translocated across the cytoplasmic membrane), and thus conserves the redox energy in a proton gradient. The protein is NADH-quinone oxidoreductase subunit I of Methylocella silvestris (strain DSM 15510 / CIP 108128 / LMG 27833 / NCIMB 13906 / BL2).